The sequence spans 261 residues: MVESKFTIGDRTFTSRLIMGTGGAANLAILEEALIASGTELTTVAIRRVDTDGGSGLLKLLSRLDIMPLPNTAGCRSAAEAVLTAQLAREALNTNWIKLEVIADERTLLPDGLELVRAAEQLVDAGFVVLPYTNDDPALAHRLEGTGCAAVMPLGSPIGTGLGINNPHNIEIIVAQARVPVVLDAGIGTTSDAALAMELGCDAVLLASAVTRAVDPPTMAAAMASAVTAGYLARRAGRIPKRFWAQASSPELMRTGEELGN.

Residue Lys-98 is the Schiff-base intermediate with DXP of the active site. 1-deoxy-D-xylulose 5-phosphate-binding positions include Gly-159, 185–186, and 207–208; these read AG and AS.

The protein belongs to the ThiG family. Homotetramer. Forms heterodimers with either ThiH or ThiS.

The protein localises to the cytoplasm. It catalyses the reaction [ThiS sulfur-carrier protein]-C-terminal-Gly-aminoethanethioate + 2-iminoacetate + 1-deoxy-D-xylulose 5-phosphate = [ThiS sulfur-carrier protein]-C-terminal Gly-Gly + 2-[(2R,5Z)-2-carboxy-4-methylthiazol-5(2H)-ylidene]ethyl phosphate + 2 H2O + H(+). The protein operates within cofactor biosynthesis; thiamine diphosphate biosynthesis. Catalyzes the rearrangement of 1-deoxy-D-xylulose 5-phosphate (DXP) to produce the thiazole phosphate moiety of thiamine. Sulfur is provided by the thiocarboxylate moiety of the carrier protein ThiS. In vitro, sulfur can be provided by H(2)S. The polypeptide is Thiazole synthase (Mycobacterium leprae (strain Br4923)).